The sequence spans 162 residues: Mitochondrial fission process protein 1 (162 aa).

A run of 3 helical transmembrane segments spans residues 36 to 56, 81 to 101, and 128 to 148; these read SLVK…YVAA, AIIA…IPGF, and TVTA…DAFV.

It belongs to the MTFP1 family.

The protein resides in the mitochondrion inner membrane. Its function is as follows. Involved in the mitochondrial division probably by regulating membrane fission. Loss-of-function leads to apoptosis. In Caenorhabditis briggsae, this protein is Mitochondrial fission process protein 1.